Reading from the N-terminus, the 191-residue chain is Prostaglandin-H2 D-isomerase (191 aa).

The first 24 residues, 1–24 (MATPNRPWMGLLLLGVLGVLQTPA), serve as a signal peptide directing secretion. N51 carries N-linked (GlcNAc...) asparagine glycosylation. Catalysis depends on C65, which acts as the Nucleophile. N-linked (GlcNAc...) asparagine glycosylation is present at N78. Cysteines 89 and 186 form a disulfide.

The protein belongs to the calycin superfamily. Lipocalin family. In terms of assembly, monomer. In the male reproductive system, it is expressed in the testis and epididymis, and is secreted into the seminal fluid.

It localises to the rough endoplasmic reticulum. It is found in the nucleus membrane. The protein resides in the golgi apparatus. Its subcellular location is the cytoplasm. The protein localises to the perinuclear region. It localises to the secreted. It catalyses the reaction prostaglandin H2 = prostaglandin D2. In terms of biological role, catalyzes the conversion of PGH2 to PGD2, a prostaglandin involved in smooth muscle contraction/relaxation and a potent inhibitor of platelet aggregation. Involved in a variety of CNS functions, such as sedation, NREM sleep and PGE2-induced allodynia, and may have an anti-apoptotic role in oligodendrocytes. Binds small non-substrate lipophilic molecules, including biliverdin, bilirubin, retinal, retinoic acid and thyroid hormone, and may act as a scavenger for harmful hydrophobic molecules and as a secretory retinoid and thyroid hormone transporter. Possibly involved in development and maintenance of the blood-brain, blood-retina, blood-aqueous humor and blood-testis barrier. It is likely to play important roles in both maturation and maintenance of the central nervous system and male reproductive system. Involved in PLA2G3-dependent maturation of mast cells. PLA2G3 is secreted by immature mast cells and acts on nearby fibroblasts upstream to PTDGS to synthesize PGD2, which in turn promotes mast cell maturation and degranulation via PTGDR. This is Prostaglandin-H2 D-isomerase (PTGDS) from Ovis aries (Sheep).